The sequence spans 105 residues: Small ribosomal subunit protein uS10 (105 aa).

The protein belongs to the universal ribosomal protein uS10 family. In terms of assembly, part of the 30S ribosomal subunit.

Its function is as follows. Involved in the binding of tRNA to the ribosomes. This Picosynechococcus sp. (strain ATCC 27264 / PCC 7002 / PR-6) (Agmenellum quadruplicatum) protein is Small ribosomal subunit protein uS10.